The sequence spans 292 residues: Protoheme IX farnesyltransferase (292 aa).

Helical transmembrane passes span 11-31 (FGIVVFSVLAGLAGYATGFQI), 37-57 (WKIFLETLLGIYFLSSGSLAL), 85-105 (AAAGILSVGLLLVGMNMLFKL), 108-128 (VAGWVGLFCVFLYNGPYTLWW), 133-153 (VFAAVPGAIPGALPVTIGYAV), 163-183 (SLYLFLIMFLWQMPHFWVLAI), 199-219 (VALGMEKTMFQVGLYTLVYVG), 223-243 (AAPMFVHASWMFVLLTFPFVF), and 261-281 (WLAFFMWLNVSMLVFIIIPVI).

Belongs to the UbiA prenyltransferase family. Protoheme IX farnesyltransferase subfamily.

The protein resides in the cell inner membrane. The enzyme catalyses heme b + (2E,6E)-farnesyl diphosphate + H2O = Fe(II)-heme o + diphosphate. Its pathway is porphyrin-containing compound metabolism; heme O biosynthesis; heme O from protoheme: step 1/1. In terms of biological role, converts heme B (protoheme IX) to heme O by substitution of the vinyl group on carbon 2 of heme B porphyrin ring with a hydroxyethyl farnesyl side group. The protein is Protoheme IX farnesyltransferase of Bdellovibrio bacteriovorus (strain ATCC 15356 / DSM 50701 / NCIMB 9529 / HD100).